Consider the following 338-residue polypeptide: MNVFYDKDADLSLIKGKQVTIIGYGSQGHAHALNLKDSGVNVTVGLRKGGASWSKAENAGLSVKEVAEAVKSADVVMMLLPDEQIADVYAKEVHANIKQGAALAFAHGFNVHYGAVIPRADLDVIMIAPKAPGHTVRGTYSQGGGVPHLIAVAQNKSGAARDIALSYAAANGGGRAGIIETNFREETETDLFGEQAVLCGGTVELIKAGFETLVEAGYAPEMAYFECLHELKLIVDLIYEGGIANMNYSISNNAEYGEYVTGPRIVTEETKKAMKQCLTDIQTGEYAKSFILENKAGAPTLQSRRRLTAEHQIEQVGAKLRAMMPWIAKNKLVDQSKN.

One can recognise a KARI N-terminal Rossmann domain in the interval 1–181 (MNVFYDKDAD…GGGRAGIIET (181 aa)). NADP(+) contacts are provided by residues 24-27 (YGSQ), Arg47, and Ser52. His107 is a catalytic residue. Position 133 (Gly133) interacts with NADP(+). Residues 182–327 (NFREETETDL…AKLRAMMPWI (146 aa)) enclose the KARI C-terminal knotted domain. 4 residues coordinate Mg(2+): Asp190, Glu194, Glu226, and Glu230. Position 251 (Ser251) interacts with substrate.

This sequence belongs to the ketol-acid reductoisomerase family. Mg(2+) is required as a cofactor.

It catalyses the reaction (2R)-2,3-dihydroxy-3-methylbutanoate + NADP(+) = (2S)-2-acetolactate + NADPH + H(+). The enzyme catalyses (2R,3R)-2,3-dihydroxy-3-methylpentanoate + NADP(+) = (S)-2-ethyl-2-hydroxy-3-oxobutanoate + NADPH + H(+). It functions in the pathway amino-acid biosynthesis; L-isoleucine biosynthesis; L-isoleucine from 2-oxobutanoate: step 2/4. Its pathway is amino-acid biosynthesis; L-valine biosynthesis; L-valine from pyruvate: step 2/4. Involved in the biosynthesis of branched-chain amino acids (BCAA). Catalyzes an alkyl-migration followed by a ketol-acid reduction of (S)-2-acetolactate (S2AL) to yield (R)-2,3-dihydroxy-isovalerate. In the isomerase reaction, S2AL is rearranged via a Mg-dependent methyl migration to produce 3-hydroxy-3-methyl-2-ketobutyrate (HMKB). In the reductase reaction, this 2-ketoacid undergoes a metal-dependent reduction by NADPH to yield (R)-2,3-dihydroxy-isovalerate. The protein is Ketol-acid reductoisomerase (NADP(+)) of Burkholderia lata (strain ATCC 17760 / DSM 23089 / LMG 22485 / NCIMB 9086 / R18194 / 383).